The chain runs to 346 residues: Fe(3+) ions import ATP-binding protein FbpC 3 (346 aa).

Residues 5 to 235 enclose the ABC transporter domain; sequence LEVDGVDKSF…PIDVATAEFI (231 aa). 37–44 contributes to the ATP binding site; it reads GPSGCGKT.

Belongs to the ABC transporter superfamily. Fe(3+) ion importer (TC 3.A.1.10) family. In terms of assembly, the complex is composed of two ATP-binding proteins (FbpC), two transmembrane proteins (FbpB) and a solute-binding protein (FbpA).

The protein resides in the cell membrane. The enzyme catalyses Fe(3+)(out) + ATP + H2O = Fe(3+)(in) + ADP + phosphate + H(+). Functionally, part of the ABC transporter complex FbpABC involved in Fe(3+) ions import. Responsible for energy coupling to the transport system. This is Fe(3+) ions import ATP-binding protein FbpC 3 from Rhodococcus jostii (strain RHA1).